We begin with the raw amino-acid sequence, 329 residues long: 4-hydroxythreonine-4-phosphate dehydrogenase (329 aa).

Substrate-binding residues include histidine 136 and threonine 137. Residues histidine 166, histidine 211, and histidine 266 each coordinate a divalent metal cation. 3 residues coordinate substrate: lysine 274, asparagine 283, and arginine 292.

It belongs to the PdxA family. Homodimer. Zn(2+) serves as cofactor. It depends on Mg(2+) as a cofactor. Requires Co(2+) as cofactor.

It is found in the cytoplasm. It catalyses the reaction 4-(phosphooxy)-L-threonine + NAD(+) = 3-amino-2-oxopropyl phosphate + CO2 + NADH. It participates in cofactor biosynthesis; pyridoxine 5'-phosphate biosynthesis; pyridoxine 5'-phosphate from D-erythrose 4-phosphate: step 4/5. In terms of biological role, catalyzes the NAD(P)-dependent oxidation of 4-(phosphooxy)-L-threonine (HTP) into 2-amino-3-oxo-4-(phosphooxy)butyric acid which spontaneously decarboxylates to form 3-amino-2-oxopropyl phosphate (AHAP). This chain is 4-hydroxythreonine-4-phosphate dehydrogenase, found in Escherichia coli (strain 55989 / EAEC).